The sequence spans 463 residues: Secretogranin-3 (463 aa).

The N-terminal stretch at 1–20 is a signal peptide; it reads MGPKYVFITAIIGVFWHVQG. Disordered stretches follow at residues 87-111, 225-267, and 353-398; these read VKRS…DSTK, DDDK…PEED, and EDKN…KGKA. Basic and acidic residues-rich tracts occupy residues 102–111 and 229–262; these read GTLDDADSTK and QEGK…RNEL.

As to quaternary structure, interacts with CHGA. Interacts with secretogranin II/SCG2. Interacts (via C-terminus) with CPE.

The protein resides in the cytoplasmic vesicle. Its subcellular location is the secretory vesicle. The protein localises to the secretory vesicle membrane. It localises to the secreted. Member of the granin protein family that regulates the biogenesis of secretory granules. Acts as a sorting receptor for intragranular proteins including chromogranin A/CHGA. May also play a role in angiogenesis. Promotes endothelial proliferation, migration and tube formation through MEK/ERK signaling pathway. The chain is Secretogranin-3 (scg3) from Xenopus tropicalis (Western clawed frog).